Consider the following 155-residue polypeptide: SsrA-binding protein (155 aa).

This sequence belongs to the SmpB family.

The protein resides in the cytoplasm. Functionally, required for rescue of stalled ribosomes mediated by trans-translation. Binds to transfer-messenger RNA (tmRNA), required for stable association of tmRNA with ribosomes. tmRNA and SmpB together mimic tRNA shape, replacing the anticodon stem-loop with SmpB. tmRNA is encoded by the ssrA gene; the 2 termini fold to resemble tRNA(Ala) and it encodes a 'tag peptide', a short internal open reading frame. During trans-translation Ala-aminoacylated tmRNA acts like a tRNA, entering the A-site of stalled ribosomes, displacing the stalled mRNA. The ribosome then switches to translate the ORF on the tmRNA; the nascent peptide is terminated with the 'tag peptide' encoded by the tmRNA and targeted for degradation. The ribosome is freed to recommence translation, which seems to be the essential function of trans-translation. The protein is SsrA-binding protein of Streptococcus equi subsp. equi (strain 4047).